The primary structure comprises 397 residues: Lysophospholipid transporter LplT (397 aa).

Over Met1–Lys17 the chain is Periplasmic. The chain crosses the membrane as a helical span at residues Ala18–Leu38. Residues Ala39–Pro52 are Cytoplasmic-facing. The helical transmembrane segment at Val53 to Ala73 threads the bilayer. Over Asp74–Leu90 the chain is Periplasmic. The helical transmembrane segment at Leu91–Ile111 threads the bilayer. Residues Gly112–Thr144 are Cytoplasmic-facing. Residues Ile145–Val165 traverse the membrane as a helical segment. Residue Ala166 is a topological domain, periplasmic. A helical transmembrane segment spans residues Leu167 to Leu187. The Cytoplasmic segment spans residues Ala188 to Ser226. The helical transmembrane segment at Leu227–Leu247 threads the bilayer. Over Gly248–Thr256 the chain is Periplasmic. The chain crosses the membrane as a helical span at residues Tyr257–Val277. Residues Thr278–Glu280 lie on the Cytoplasmic side of the membrane. Residues Thr281–Leu301 form a helical membrane-spanning segment. Residues Gln302–Glu304 lie on the Periplasmic side of the membrane. A helical transmembrane segment spans residues Leu305–Pro325. At Leu326–Ala343 the chain is on the cytoplasmic side. A helical membrane pass occupies residues Ile344–Leu364. The Periplasmic portion of the chain corresponds to Ala365–Val366. Residues Leu367–Ile387 form a helical membrane-spanning segment. The Cytoplasmic segment spans residues Thr388–His397.

This sequence belongs to the major facilitator superfamily. LplT (TC 2.A.1.42) family.

The protein resides in the cell inner membrane. Functionally, catalyzes the facilitated diffusion of 2-acyl-glycero-3-phosphoethanolamine (2-acyl-GPE) into the cell. The polypeptide is Lysophospholipid transporter LplT (Escherichia fergusonii (strain ATCC 35469 / DSM 13698 / CCUG 18766 / IAM 14443 / JCM 21226 / LMG 7866 / NBRC 102419 / NCTC 12128 / CDC 0568-73)).